The chain runs to 87 residues: UPF0335 protein Avi_3695 (87 aa).

It belongs to the UPF0335 family.

The polypeptide is UPF0335 protein Avi_3695 (Allorhizobium ampelinum (strain ATCC BAA-846 / DSM 112012 / S4) (Agrobacterium vitis (strain S4))).